The sequence spans 271 residues: Ribosomal RNA small subunit methyltransferase A (271 aa).

S-adenosyl-L-methionine is bound by residues histidine 14, leucine 16, glycine 41, glutamate 63, aspartate 89, and asparagine 107.

Belongs to the class I-like SAM-binding methyltransferase superfamily. rRNA adenine N(6)-methyltransferase family. RsmA subfamily.

It is found in the cytoplasm. The catalysed reaction is adenosine(1518)/adenosine(1519) in 16S rRNA + 4 S-adenosyl-L-methionine = N(6)-dimethyladenosine(1518)/N(6)-dimethyladenosine(1519) in 16S rRNA + 4 S-adenosyl-L-homocysteine + 4 H(+). Specifically dimethylates two adjacent adenosines (A1518 and A1519) in the loop of a conserved hairpin near the 3'-end of 16S rRNA in the 30S particle. May play a critical role in biogenesis of 30S subunits. The chain is Ribosomal RNA small subunit methyltransferase A from Lawsonia intracellularis (strain PHE/MN1-00).